The primary structure comprises 333 residues: D-fructose 1,6-bisphosphatase class 2/sedoheptulose 1,7-bisphosphatase (333 aa).

Mn(2+) is bound by residues Asp33, Glu57, Asp85, and Glu88. Substrate-binding positions include 88–90, Tyr119, 164–166, and 186–188; these read EGT, RAR, and DGD. Glu213 contacts Mn(2+).

It belongs to the FBPase class 2 family. In terms of assembly, homotetramer. The cofactor is Mn(2+).

The enzyme catalyses beta-D-fructose 1,6-bisphosphate + H2O = beta-D-fructose 6-phosphate + phosphate. It catalyses the reaction D-sedoheptulose 1,7-bisphosphate + H2O = D-sedoheptulose 7-phosphate + phosphate. It functions in the pathway carbohydrate biosynthesis; Calvin cycle. Its function is as follows. Catalyzes the hydrolysis of fructose 1,6-bisphosphate (Fru 1,6-P2) and sedoheptulose 1,7-bisphosphate (Sed 1,7-P2) to fructose 6-phosphate and sedoheptulose 7-phosphate, respectively. The chain is D-fructose 1,6-bisphosphatase class 2/sedoheptulose 1,7-bisphosphatase from Prochlorococcus marinus subsp. pastoris (strain CCMP1986 / NIES-2087 / MED4).